The following is a 445-amino-acid chain: Trigger factor (445 aa).

In terms of domain architecture, PPIase FKBP-type spans 162–247; that stretch reads GDQITMDAVG…VKAVHTAEPT (86 aa).

The protein belongs to the FKBP-type PPIase family. Tig subfamily.

The protein localises to the cytoplasm. The enzyme catalyses [protein]-peptidylproline (omega=180) = [protein]-peptidylproline (omega=0). Its function is as follows. Involved in protein export. Acts as a chaperone by maintaining the newly synthesized protein in an open conformation. Functions as a peptidyl-prolyl cis-trans isomerase. This is Trigger factor from Rickettsia bellii (strain OSU 85-389).